The sequence spans 208 residues: Small ribosomal subunit protein uS4 (208 aa).

The S4 RNA-binding domain occupies 98–158 (RRLDNVVYRL…EKSRKIACIN (61 aa)).

This sequence belongs to the universal ribosomal protein uS4 family. In terms of assembly, part of the 30S ribosomal subunit. Contacts protein S5. The interaction surface between S4 and S5 is involved in control of translational fidelity.

Functionally, one of the primary rRNA binding proteins, it binds directly to 16S rRNA where it nucleates assembly of the body of the 30S subunit. In terms of biological role, with S5 and S12 plays an important role in translational accuracy. This is Small ribosomal subunit protein uS4 from Geobacter sulfurreducens (strain ATCC 51573 / DSM 12127 / PCA).